A 181-amino-acid polypeptide reads, in one-letter code: Large ribosomal subunit protein uL5 (181 aa).

Belongs to the universal ribosomal protein uL5 family. As to quaternary structure, part of the 50S ribosomal subunit; part of the 5S rRNA/L5/L18/L25 subcomplex. Contacts the 5S rRNA and the P site tRNA. Forms a bridge to the 30S subunit in the 70S ribosome.

Functionally, this is one of the proteins that bind and probably mediate the attachment of the 5S RNA into the large ribosomal subunit, where it forms part of the central protuberance. In the 70S ribosome it contacts protein S13 of the 30S subunit (bridge B1b), connecting the 2 subunits; this bridge is implicated in subunit movement. Contacts the P site tRNA; the 5S rRNA and some of its associated proteins might help stabilize positioning of ribosome-bound tRNAs. The chain is Large ribosomal subunit protein uL5 from Thermosipho africanus (strain TCF52B).